The primary structure comprises 169 residues: MKLSVISAVFVSLAAAAAAKTTPTREVAAAAAVPDPVQDGIAKNCKTYYQAKPGDSCQKIVNDYGVFTFGDFFKWNPAVGKNCESLLGGWYYCVGVPGTPSKCTEKHPTPTQPGSACKCGQWYKVKKGDNCQALEKKFKISDKDFRKLNGGLNKECSNLQADVNVCVKA.

The N-terminal stretch at 1 to 19 (MKLSVISAVFVSLAAAAAA) is a signal peptide. LysM domains follow at residues 47-94 (TYYQ…YYCV) and 121-167 (QWYK…NVCV).

Belongs to the secreted LysM effector family.

Secreted effector that enables the plant pathogenic fungus to manipulate host defenses for successful infection. Required for the full virulence to infect insect hosts. Protects fungal hyphae against the hydrolytic activity of chitinase and plays an important role in evasion of insect immunities. Binds chitin and can additionally bind chitosan and cellulose. Coats and protects the cell walls of insect pathogens from host cell recognition and additionally shields fungal cells from the hydrolysis of insect chitinases. This chain is Secreted LysM effector Blys5, found in Beauveria bassiana (strain ARSEF 2860) (White muscardine disease fungus).